We begin with the raw amino-acid sequence, 187 residues long: Holliday junction resolvase (187 aa).

Belongs to the RuvC family. Poxviruses-type subfamily. The cofactor is Mg(2+). In terms of processing, acylated by palmitic acid group(s).

The protein resides in the membrane. Nuclease that specifically cleaves and resolves four-way DNA Holliday junctions into linear duplex products. The polypeptide is Holliday junction resolvase (Vaccinia virus (strain Ankara) (VACV)).